The chain runs to 315 residues: Protein sprouty homolog 2 (315 aa).

Polar residues predominate over residues 1–15 (MEARAQSGNGSQPLL). 2 disordered regions span residues 1 to 39 (MEAR…QQVH) and 51 to 140 (NTNE…GSSF). Positions 20–32 (DGGRQRGEPDPRD) are enriched in basic and acidic residues. Positions 108–140 (SRSISTVSSGSRSSTRTSTSSSSSEQRLLGSSF) are enriched in low complexity. The required for interaction with CAV1 stretch occupies residues 118-315 (SRSSTRTSTS…VPPRNFEKPT (198 aa)). An SPR domain is found at 177 to 291 (RCEDCGKCKC…CYDRVNRPGC (115 aa)). Positions 178–315 (CEDCGKCKCK…VPPRNFEKPT (138 aa)) are required for interaction with TESK1.

This sequence belongs to the sprouty family. Forms heterodimers with SPRY1. Forms a tripartite complex containing GAB1, METTL13 and SPRY2. Within the complex interacts with METTL13. Interacts with RAF1. Interacts (via C-terminus) with TESK1 (via C-terminus); the interaction disrupts SPRY2 interaction with GRB2, potentially via disruption of SPRY2 serine dephosphorylation. Interacts with PPP2R1A/PP2A-A and PPP2CA/PP2A-C; the interaction with PPP2CA/PP2A-C is inhibited by interaction with TESK1, possibly by vesicular sequestration of SPRY2. Inhibition of the interaction with the serine/threonine-protein phosphatase 2A (PP2A) holoenzyme results in loss of PP2A-mediated dephosphorylation, resulting in the loss of SPRY2 interaction with GRB2. Interacts with GRB2. Interacts with CBL/C-CBL; the interaction inhibits CBL-mediated ubiquitination of EGFR. Interacts (via C-terminus) with CAV1 (via C-terminus). Post-translationally, cleaved at Pro-144 by the prolyl endopeptidase FAP (seprase) activity (in vitro).

The protein localises to the cytoplasm. Its subcellular location is the cytoskeleton. It is found in the cell projection. It localises to the ruffle membrane. Antagonist of fibroblast growth factor (FGF) pathways via inhibition of FGF-mediated phosphorylation of ERK1/2. Thereby acts as an antagonist of FGF-induced retinal lens fiber differentiation, may inhibit limb bud outgrowth and may negatively modulate respiratory organogenesis. Inhibits TGFB-induced epithelial-to-mesenchymal transition in retinal lens epithelial cells. Inhibits CBL/C-CBL-mediated EGFR ubiquitination. The polypeptide is Protein sprouty homolog 2 (SPRY2) (Macaca fascicularis (Crab-eating macaque)).